The sequence spans 396 residues: NADH-quinone oxidoreductase subunit D 2 (396 aa).

The protein belongs to the complex I 49 kDa subunit family. In terms of assembly, NDH-1 is composed of 14 different subunits. Subunits NuoB, C, D, E, F, and G constitute the peripheral sector of the complex.

It localises to the cell inner membrane. It catalyses the reaction a quinone + NADH + 5 H(+)(in) = a quinol + NAD(+) + 4 H(+)(out). Its function is as follows. NDH-1 shuttles electrons from NADH, via FMN and iron-sulfur (Fe-S) centers, to quinones in the respiratory chain. The immediate electron acceptor for the enzyme in this species is believed to be ubiquinone. Couples the redox reaction to proton translocation (for every two electrons transferred, four hydrogen ions are translocated across the cytoplasmic membrane), and thus conserves the redox energy in a proton gradient. This chain is NADH-quinone oxidoreductase subunit D 2, found in Beijerinckia indica subsp. indica (strain ATCC 9039 / DSM 1715 / NCIMB 8712).